Here is an 86-residue protein sequence, read N- to C-terminus: MNFQPLGKRVLVKRVEETKTTASGIIIPDNAKEKPLMGEVVAVSKEITDIANGDKIMFAKYGGTEIKLDNNEYLVLNLDDILGILK.

The protein belongs to the GroES chaperonin family. As to quaternary structure, heptamer of 7 subunits arranged in a ring. Interacts with the chaperonin GroEL.

Its subcellular location is the cytoplasm. Functionally, together with the chaperonin GroEL, plays an essential role in assisting protein folding. The GroEL-GroES system forms a nano-cage that allows encapsulation of the non-native substrate proteins and provides a physical environment optimized to promote and accelerate protein folding. GroES binds to the apical surface of the GroEL ring, thereby capping the opening of the GroEL channel. In Campylobacter jejuni subsp. doylei (strain ATCC BAA-1458 / RM4099 / 269.97), this protein is Co-chaperonin GroES.